We begin with the raw amino-acid sequence, 286 residues long: General stress protein 39 (286 aa).

A disordered region spans residues 1–26; sequence MANYPKELPAQTQSRQPGIESEMNPS. 46–70 is a binding site for NAD(+); it reads LITGGDSGIGRAVSVAYAKEGADIA. Ser178 is a substrate binding site. Tyr191 functions as the Proton acceptor in the catalytic mechanism.

The protein belongs to the short-chain dehydrogenases/reductases (SDR) family.

This Bacillus subtilis (strain 168) protein is General stress protein 39 (ydaD).